We begin with the raw amino-acid sequence, 129 residues long: HTH-type transcriptional regulator GlnR (129 aa).

The 69-residue stretch at 10 to 78 (LFPIGIVMDL…MAGIKQVLLM (69 aa)) folds into the HTH merR-type domain. The H-T-H motif DNA-binding region spans 13–32 (IGIVMDLTQLSARQIRYYEE).

As to quaternary structure, homodimer under conditions of nitrogen excess. Monomer under conditions of nitrogen-limited. Interacts with feedback-inhibited GlnA in order to stabilizes GlnR-DNA complex.

Its activity is regulated as follows. Under conditions of nitrogen excess, the DNA binding activity of GlnR is activated by a transient interaction with feedback-inhibited GlnA. Under conditions of nitrogen-limited, GlnR is autoinhibited by its C-terminal region. Transcription repressor during nitrogen excess. On the contrary of the MerR members, which require longer DNA sites for high-affinity binding, GlnR requires a DNA sequence of 17 nucleotides as minimal binding site. This Bacillus anthracis protein is HTH-type transcriptional regulator GlnR.